A 170-amino-acid polypeptide reads, in one-letter code: Photosystem II extrinsic protein V (170 aa).

Positions 1-33 are cleaved as a signal peptide; sequence MASLFASLGRSLIKLLIVLPVIIGLSISSPAMA. Cys-70, Cys-73, His-74, and His-125 together coordinate heme c.

The protein belongs to the cytochrome c family. PsbV subfamily. PSII is composed of 1 copy each of membrane proteins PsbA, PsbB, PsbC, PsbD, PsbE, PsbF, PsbH, PsbI, PsbJ, PsbK, PsbL, PsbM, PsbT, PsbX, PsbY, Psb30/Ycf12, peripheral proteins PsbO, CyanoQ (PsbQ), PsbU, PsbV and a large number of cofactors. It forms dimeric complexes. Heme c serves as cofactor.

The protein resides in the cellular thylakoid membrane. In terms of biological role, one of the extrinsic, lumenal subunits of photosystem II (PSII). PSII is a light-driven water plastoquinone oxidoreductase, using light energy to abstract electrons from H(2)O, generating a proton gradient subsequently used for ATP formation. The extrinsic proteins stabilize the structure of photosystem II oxygen-evolving complex (OEC), the ion environment of oxygen evolution and protect the OEC against heat-induced inactivation. Low-potential cytochrome c that plays a role in the OEC of PSII. This is Photosystem II extrinsic protein V from Prochlorococcus marinus (strain MIT 9313).